We begin with the raw amino-acid sequence, 391 residues long: Putative protein PLEKHA9 (391 aa).

In Homo sapiens (Human), this protein is Putative protein PLEKHA9 (PLEKHA8P1).